The primary structure comprises 650 residues: Chaperone protein DnaK (650 aa).

Position 200 is a phosphothreonine; by autocatalysis (Thr-200). Residues 614–634 (AGAAGAAGAAEGAAHAGGAQQ) are disordered.

This sequence belongs to the heat shock protein 70 family.

Its function is as follows. Acts as a chaperone. The polypeptide is Chaperone protein DnaK (Burkholderia cenocepacia (strain ATCC BAA-245 / DSM 16553 / LMG 16656 / NCTC 13227 / J2315 / CF5610) (Burkholderia cepacia (strain J2315))).